The sequence spans 478 residues: Zinc metalloproteinase/disintegrin (478 aa).

The first 20 residues, 1 to 20, serve as a signal peptide directing secretion; it reads MIQVLLVTICLAAFPYQGSS. A propeptide spanning residues 21-187 is cleaved from the precursor; it reads IILESGNVND…PIKKASHLNL (167 aa). Residues 193–389 form the Peptidase M12B domain; it reads RYVEIVIVVD…QKPQCILKKP (197 aa). 3 disulfide bridges follow: Cys304–Cys384, Cys344–Cys368, and Cys346–Cys351. His329 is a Zn(2+) binding site. Residue Glu330 is part of the active site. Zn(2+)-binding residues include His333 and His339. Positions 390-408 are excised as a propeptide; sequence LRTDTVSTPVSGNELLEAR. In terms of domain architecture, Disintegrin spans 397–478; it reads TPVSGNELLE…ADCPRNVLYG (82 aa). Cystine bridges form between Cys411–Cys420, Cys413–Cys421, Cys426–Cys440, Cys434–Cys464, Cys439–Cys443, and Cys452–Cys471. The propeptide occupies 474 to 478; that stretch reads NVLYG.

This sequence belongs to the venom metalloproteinase (M12B) family. P-II subfamily. P-IIa sub-subfamily. It depends on Zn(2+) as a cofactor. In terms of tissue distribution, expressed by the venom gland.

It is found in the secreted. In terms of biological role, snake venom zinc metalloproteinase that causes hemorrhage by provoking the degradation of the sub-endothelial matrix proteins (fibronectin, laminin, type IV collagen, nidogen, and gelatins). Functionally, displays low cytotoxicity. In vitro, inhibits cancer cell migration (human breast cancer cell line MDA-MB-231) with a significant rate after 24 hours of incubation. The chain is Zinc metalloproteinase/disintegrin (MPII) from Crotalus durissus collilineatus (Brazilian rattlesnake).